The following is a 425-amino-acid chain: Tyrosine--tRNA ligase (425 aa).

Residue Tyr-33 coordinates L-tyrosine. Positions 38–47 (PTADSLHLGN) match the 'HIGH' region motif. Tyr-170 and Gln-174 together coordinate L-tyrosine. The 'KMSKS' region signature appears at 230-234 (KFGKS). Residue Lys-233 participates in ATP binding. In terms of domain architecture, S4 RNA-binding spans 356 to 422 (KKLIDLLVET…GKKNKMIIRL (67 aa)).

The protein belongs to the class-I aminoacyl-tRNA synthetase family. TyrS type 1 subfamily. As to quaternary structure, homodimer.

It localises to the cytoplasm. It catalyses the reaction tRNA(Tyr) + L-tyrosine + ATP = L-tyrosyl-tRNA(Tyr) + AMP + diphosphate + H(+). In terms of biological role, catalyzes the attachment of tyrosine to tRNA(Tyr) in a two-step reaction: tyrosine is first activated by ATP to form Tyr-AMP and then transferred to the acceptor end of tRNA(Tyr). This is Tyrosine--tRNA ligase from Protochlamydia amoebophila (strain UWE25).